A 125-amino-acid chain; its full sequence is Barwin (125 aa).

At glutamine 1 the chain carries Pyrrolidone carboxylic acid. Positions 1-125 (QQANDVRATY…VNYQFVDCRD (125 aa)) constitute a Barwin domain. Disulfide bonds link cysteine 31–cysteine 63, cysteine 52–cysteine 86, and cysteine 66–cysteine 123.

In terms of biological role, may be involved in a defense mechanism. Probable plant lectin. Binds weakly a chitin analog. This Hordeum vulgare (Barley) protein is Barwin.